The chain runs to 363 residues: Phospho-N-acetylmuramoyl-pentapeptide-transferase (363 aa).

Transmembrane regions (helical) follow at residues 4 to 24, 28 to 48, 72 to 92, 96 to 116, 129 to 149, 169 to 189, 200 to 220, 241 to 261, 266 to 286, 294 to 314, and 342 to 362; these read NLLV…NVIV, IAIL…IKYF, TPTM…LMLA, NIYV…GLID, INAT…CMIV, LTID…IGSS, GLVT…CYLA, ELTV…WYNI, IFMG…ISVI, GIIG…IYSI, and IVSR…SSLI.

The protein belongs to the glycosyltransferase 4 family. MraY subfamily. The cofactor is Mg(2+).

It is found in the cell inner membrane. It catalyses the reaction UDP-N-acetyl-alpha-D-muramoyl-L-alanyl-gamma-D-glutamyl-meso-2,6-diaminopimeloyl-D-alanyl-D-alanine + di-trans,octa-cis-undecaprenyl phosphate = di-trans,octa-cis-undecaprenyl diphospho-N-acetyl-alpha-D-muramoyl-L-alanyl-D-glutamyl-meso-2,6-diaminopimeloyl-D-alanyl-D-alanine + UMP. It functions in the pathway cell wall biogenesis; peptidoglycan biosynthesis. Functionally, catalyzes the initial step of the lipid cycle reactions in the biosynthesis of the cell wall peptidoglycan: transfers peptidoglycan precursor phospho-MurNAc-pentapeptide from UDP-MurNAc-pentapeptide onto the lipid carrier undecaprenyl phosphate, yielding undecaprenyl-pyrophosphoryl-MurNAc-pentapeptide, known as lipid I. In Orientia tsutsugamushi (strain Ikeda) (Rickettsia tsutsugamushi), this protein is Phospho-N-acetylmuramoyl-pentapeptide-transferase.